Consider the following 1241-residue polypeptide: MIMFLPLGRISLGILILFLTGGNLVSVSEEIQDRMHAVAVLSPKESTDLSLPTRKRQLLDATETGRRWPLRRRRSILFPNGVRICPSDTVAEAVANHVKYFKARVCQEAIWEAFRTFWDRLPGREEYQYWMNLCEDGVTSVFEMGTQFSQSVEHRHLIMEKLTYTKEAESSSCKDQACGPELSSPVPIGETSTLAGAVSSASYPGAASERSAASPQESISNEIENVTEQPTPPAAEQIAEFSIQLLGKQYSEELRDPSSALYRLLVEEFISEVEKAFTGLPGYKGIHVLDFRSPKENGSGIDVHYAVTFNGEAISNTTWDLISLHSNKVENHGLVELDDKPTAVYTISNFRDYIAETLHQNFLMGNSSLNPDPKSLQLINVRGVLLPQTEEIVWNTQSSSLQVTTSSILDNTLQAEWLSADESITTTTTTTISPFGFSSGPPSATGRELHSESTLGDIVSTPKLASPSKVVLSSSPEVLGGSSLTLHSVTPAVLQIDLPVAPEGRTSGSSILEDDNTEESEDVSIDVLPSSSLIQPVPKETVPPMEDSDMILLTSSPHLTSSVIEDLAKDITTPSGLDSLASRVSDKLDVSPWFPDTSVEKEFIFESGLGSGSGKNVDVIDWPWSETSLEKTTEPLSKSWSEEQDTLLPTESIEKLHMYFTEQMIEPSAHRYGDGPIYFTEEESHVRSTIPIFAESATQPTSLISSKHTSDVPDIDSYSVTKAPFLLATIANTASTKETDEVNTLLKKGMVQTEPSSPKGLDSKISVARPDMQPVWTILPESDTVWARTSSLGKLSRDTLVSTPESADRLWLKASMTQPAELPPSTHSIQLEDEVIMAVQNISLELDQVGTDYYQPELTQEQNGKVDSYVEMPTHVHYTEMPLVAQPTKGGVLSRTQTAGALVVFFSLRVTNMLFSEDLFNKNSLEYKALEQRFLELLVPYLQSNLSGFQNLEILNFRNGSIVVNSRVKFAESVPPNVNNAIYMILEDFCTTAYQTMNLDIDKYSLDVESGDDANPCKFQACNEFSECLVNPWSGEAKCKCHPGYLSVDELPCQSVCDLQPDFCLNDGKCDVMPGHGAICRCRVGSNWWYRGQHCEEFVSEPFVIGITIASVVSLLLVASAVVFFLAKMLQAQNVRRERQRPTNRQPDSLSSVENAMKYNPAYESRLAGCEQYEKPYSQHPFYSSASEEVIGGLSREEIRQMYESSDLSKEEIQERMRILELYANDPEFAAFVREHEMEEL.

The N-terminal stretch at 1-28 (MIMFLPLGRISLGILILFLTGGNLVSVS) is a signal peptide. The Extracellular segment spans residues 29-1104 (EEIQDRMHAV…CEEFVSEPFV (1076 aa)). An O-linked (GalNAc...) threonine glycan is attached at Thr193. The disordered stretch occupies residues 206-234 (AASERSAASPQESISNEIENVTEQPTPPA). The span at 211-229 (SAASPQESISNEIENVTEQ) shows a compositional bias: polar residues. N-linked (GlcNAc...) asparagine glycosylation occurs at Asn225. A glycan (O-linked (GalNAc...) threonine) is linked at Thr231. The region spanning 235–349 (AEQIAEFSIQ…KPTAVYTISN (115 aa)) is the SEA 1 domain. A hyaluronan-binding motif involved in chondroitin sulfate A-binding region spans residues 255-263 (RDPSSALYR). N-linked (GlcNAc...) asparagine glycans are attached at residues Asn297, Asn316, and Asn366. Thr429, Thr430, and Thr431 each carry an O-linked (GalNAc...) threonine glycan. Over residues 431-443 (TISPFGFSSGPPS) the composition is skewed to low complexity. Disordered stretches follow at residues 431 to 456 (TISP…STLG) and 500 to 520 (VAPE…TEES). Residue Thr817 is glycosylated (O-linked (GalNAc...) threonine). N-linked (GlcNAc...) asparagine glycans are attached at residues Asn841, Asn945, and Asn959. The SEA 2 domain maps to 900–1013 (GALVVFFSLR…YSLDVESGDD (114 aa)). EGF-like domains lie at 1013 to 1054 (DANP…LPCQ) and 1055 to 1096 (SVCD…QHCE). Cystine bridges form between Cys1017/Cys1028, Cys1022/Cys1039, Cys1041/Cys1053, Cys1057/Cys1070, Cys1064/Cys1080, and Cys1082/Cys1095. A hyaluronan-binding motif involved in chondroitin sulfate C-binding region spans residues 1083-1091 (RVGSNWWYR). Residues 1105–1125 (IGITIASVVSLLLVASAVVFF) form a helical membrane-spanning segment. The Cytoplasmic portion of the chain corresponds to 1126–1241 (LAKMLQAQNV…FVREHEMEEL (116 aa)). The tract at residues 1128-1136 (KMLQAQNVR) is hyaluronan-binding motif involved in chondroitin sulfate A- and C-binding. The segment at 1139–1145 (RQRPTNR) is hyaluronan-binding motif involved in chondroitin sulfate C-binding. The tract at residues 1210–1218 (KEEIQERMR) is hyaluronan-binding motif involved in chondroitin sulfate A- and C-binding motif.

Expressed in the pineal gland and the outer layer of the retina.

Its subcellular location is the photoreceptor outer segment membrane. The protein resides in the photoreceptor inner segment membrane. The protein localises to the secreted. It localises to the extracellular space. It is found in the extracellular matrix. Its subcellular location is the interphotoreceptor matrix. Chondroitin sulfate- and hyaluronan-binding proteoglycan involved in the organization of interphotoreceptor matrix; may participate in the maturation and maintenance of the light-sensitive photoreceptor outer segment. Binds heparin. The chain is Interphotoreceptor matrix proteoglycan 2 (Impg2) from Rattus norvegicus (Rat).